We begin with the raw amino-acid sequence, 408 residues long: Putative gustatory receptor 58b (408 aa).

The Cytoplasmic segment spans residues 1–44; that stretch reads MLHPKLGRVMNVVYYHSVVFALMSTTLRIRSCRKCLRLEKVSRT. A helical transmembrane segment spans residues 45-65; sequence YTIYSFFVGIFLFLNLYFMVP. The Extracellular segment spans residues 66–82; it reads RIMEDGYMKYNIVLQWN. A helical membrane pass occupies residues 83-103; it reads FFVMLFLRAIAVVSCYGTLWL. The Cytoplasmic portion of the chain corresponds to 104 to 150; it reads KRHKIIQLYKYSLIYWKRFGHITRAIVDKKELLDLQESLARIMIRKI. A helical membrane pass occupies residues 151–171; the sequence is ILLYSAFLCSTVLQYQLLSVI. Over 172-193 the chain is Extracellular; that stretch reads NPQIFLAFCARLTHFLHFLCVK. A helical transmembrane segment spans residues 194 to 214; that stretch reads MGFFGVLVLLNHQFLVIHLAI. Residues 215-245 lie on the Cytoplasmic side of the membrane; sequence NALHGRKARKKWKALRSVAAMHLKTLRLARR. A helical transmembrane segment spans residues 246-266; it reads IFDMFDIANATVFINMFMTAI. The Extracellular segment spans residues 267-284; that stretch reads NILYHAVQYSNSSIKSNG. N-linked (GlcNAc...) asparagine glycosylation is present at Asn-277. Residues 285-305 form a helical membrane-spanning segment; that stretch reads WGILFGNGLIVFNFWGTMALM. At 306–364 the chain is on the cytoplasmic side; that stretch reads EMLDSVVTSCNNTGQQLRQLSDLPKVGPKMQRELDVFTMQLRQNRLVYKICGIVELDKP. A helical transmembrane segment spans residues 365-385; that stretch reads ACLSYIGSILSNVIILMQFDL. Over 386–408 the chain is Extracellular; it reads RRQRQPINDRQYLIHLMKNKTKV. N-linked (GlcNAc...) asparagine glycosylation is present at Asn-404.

This sequence belongs to the insect chemoreceptor superfamily. Gustatory receptor (GR) family. Gr22e subfamily. Expressed in the adult labellar chemosensory neurons, labral sense organ and thorax. In larvae, is in neurons of the terminal external chemosensory organ as well as in the dorsal pharyngeal sense organ.

Its subcellular location is the cell membrane. Probable gustatory receptor which mediates acceptance or avoidance behavior, depending on its substrates. In Drosophila melanogaster (Fruit fly), this protein is Putative gustatory receptor 58b (Gr58b).